The following is a 105-amino-acid chain: Heat shock protein HspQ (105 aa).

This sequence belongs to the HspQ family.

It localises to the cytoplasm. Functionally, involved in the degradation of certain denaturated proteins, including DnaA, during heat shock stress. This is Heat shock protein HspQ from Klebsiella pneumoniae (strain 342).